The following is a 356-amino-acid chain: UDP-N-acetylglucosamine--N-acetylmuramyl-(pentapeptide) pyrophosphoryl-undecaprenol N-acetylglucosamine transferase (356 aa).

UDP-N-acetyl-alpha-D-glucosamine-binding residues include Arg-166, Ser-196, and Gln-290.

Belongs to the glycosyltransferase 28 family. MurG subfamily.

It localises to the cell membrane. It carries out the reaction Mur2Ac(oyl-L-Ala-gamma-D-Glu-L-Lys-D-Ala-D-Ala)-di-trans,octa-cis-undecaprenyl diphosphate + UDP-N-acetyl-alpha-D-glucosamine = beta-D-GlcNAc-(1-&gt;4)-Mur2Ac(oyl-L-Ala-gamma-D-Glu-L-Lys-D-Ala-D-Ala)-di-trans,octa-cis-undecaprenyl diphosphate + UDP + H(+). Its pathway is cell wall biogenesis; peptidoglycan biosynthesis. Its function is as follows. Cell wall formation. Catalyzes the transfer of a GlcNAc subunit on undecaprenyl-pyrophosphoryl-MurNAc-pentapeptide (lipid intermediate I) to form undecaprenyl-pyrophosphoryl-MurNAc-(pentapeptide)GlcNAc (lipid intermediate II). In Staphylococcus aureus (strain MW2), this protein is UDP-N-acetylglucosamine--N-acetylmuramyl-(pentapeptide) pyrophosphoryl-undecaprenol N-acetylglucosamine transferase.